The chain runs to 970 residues: Protein CLASP-3 (970 aa).

Disordered regions lie at residues 314-377 (SRLA…QKAR) and 651-675 (NGIS…ETPH). Residues 344-355 (GSRTRTSSITSN) show a composition bias toward polar residues. One copy of the HEAT repeat lies at 905–943 (ITPCVIKAYQSTSSSVRKTVVYCLVAMVNRVGEQRMAPH).

This sequence belongs to the CLASP family.

The protein localises to the cytoplasm. Its subcellular location is the cytoskeleton. Microtubule plus-end tracking protein that promotes the stabilization of dynamic microtubules. The polypeptide is Protein CLASP-3 (cls-3) (Caenorhabditis briggsae).